Reading from the N-terminus, the 179-residue chain is Large ribosomal subunit protein uL5 (179 aa).

It belongs to the universal ribosomal protein uL5 family. Part of the 50S ribosomal subunit; part of the 5S rRNA/L5/L18/L25 subcomplex. Contacts the 5S rRNA and the P site tRNA. Forms a bridge to the 30S subunit in the 70S ribosome.

Its function is as follows. This is one of the proteins that bind and probably mediate the attachment of the 5S RNA into the large ribosomal subunit, where it forms part of the central protuberance. In the 70S ribosome it contacts protein S13 of the 30S subunit (bridge B1b), connecting the 2 subunits; this bridge is implicated in subunit movement. Contacts the P site tRNA; the 5S rRNA and some of its associated proteins might help stabilize positioning of ribosome-bound tRNAs. The protein is Large ribosomal subunit protein uL5 of Delftia acidovorans (strain DSM 14801 / SPH-1).